An 86-amino-acid chain; its full sequence is Cell division topological specificity factor (86 aa).

The protein belongs to the MinE family.

Prevents the cell division inhibition by proteins MinC and MinD at internal division sites while permitting inhibition at polar sites. This ensures cell division at the proper site by restricting the formation of a division septum at the midpoint of the long axis of the cell. This is Cell division topological specificity factor from Bordetella petrii (strain ATCC BAA-461 / DSM 12804 / CCUG 43448).